We begin with the raw amino-acid sequence, 532 residues long: Flavin-containing monooxygenase 1 (532 aa).

Residue Ala2 is modified to N-acetylalanine. At 2-510 the chain is on the lumenal side; the sequence is AKRVAIVGAG…ARVVQESPSP (509 aa). Residues 9-13, Glu32, 40-41, and 61-62 each bind FAD; these read GAGVS, LW, and NS. NADP(+) contacts are provided by residues 60 to 61 and 195 to 198; these read SN and SGTD. Residues 511-531 traverse the membrane as a helical segment; it reads FESFLKVFSFLALLVAIFLIF. A topological domain (cytoplasmic) is located at residue Leu532.

Belongs to the FMO family. Requires FAD as cofactor. In terms of tissue distribution, expressed mainly in fetal and adult liver.

The protein resides in the endoplasmic reticulum membrane. The enzyme catalyses hypotaurine + NADPH + O2 + H(+) = taurine + NADP(+) + H2O. The catalysed reaction is hypotaurine + NADH + O2 + H(+) = taurine + NAD(+) + H2O. It catalyses the reaction trimethylamine + NADPH + O2 = trimethylamine N-oxide + NADP(+) + H2O. It carries out the reaction N,N-dimethylaniline + NADPH + O2 + H(+) = N,N-dimethylaniline N-oxide + NADP(+) + H2O. Broad spectrum monooxygenase that catalyzes the oxygenation of a wide variety of nitrogen- and sulfur-containing compounds including xenobiotics. Catalyzes the S-oxygenation of hypotaurine to produce taurine, an organic osmolyte involved in cell volume regulation as well as a variety of cytoprotective and developmental processes. In vitro, catalyzes the N-oxygenation of trimethylamine (TMA) to produce trimethylamine N-oxide (TMAO) and could therefore participate to the detoxification of this compound that is generated by the action of gut microbiota from dietary precursors such as choline, choline containing compounds, betaine or L-carnitine. The chain is Flavin-containing monooxygenase 1 from Homo sapiens (Human).